Consider the following 152-residue polypeptide: Deoxyuridine 5'-triphosphate nucleotidohydrolase (152 aa).

Substrate-binding positions include 70–72 (RSG), Asn-83, 87–89 (LID), and Met-97.

This sequence belongs to the dUTPase family. Requires Mg(2+) as cofactor.

It carries out the reaction dUTP + H2O = dUMP + diphosphate + H(+). It participates in pyrimidine metabolism; dUMP biosynthesis; dUMP from dCTP (dUTP route): step 2/2. In terms of biological role, this enzyme is involved in nucleotide metabolism: it produces dUMP, the immediate precursor of thymidine nucleotides and it decreases the intracellular concentration of dUTP so that uracil cannot be incorporated into DNA. The protein is Deoxyuridine 5'-triphosphate nucleotidohydrolase of Buchnera aphidicola subsp. Baizongia pistaciae (strain Bp).